A 253-amino-acid polypeptide reads, in one-letter code: Retinoic acid early-inducible protein 1-beta (253 aa).

An N-terminal signal peptide occupies residues 1–28; it reads MAKAAVTKRHHFMIQKLLILLSYGYTNG. A disulfide bond links cysteine 37 and cysteine 56. Residues asparagine 38, asparagine 70, asparagine 83, asparagine 143, and asparagine 156 are each glycosylated (N-linked (GlcNAc...) asparagine). A disulfide bridge links cysteine 90 with cysteine 190. The tract at residues 198–230 is disordered; the sequence is LKQSKEKPRSTSRSPSITQLTSTSPLPPPSHST. Residues 211–221 show a composition bias toward low complexity; that stretch reads SPSITQLTSTS. Residue serine 229 is the site of GPI-anchor amidated serine attachment. Positions 230-253 are cleaved as a propeptide — removed in mature form; sequence TSKKGFISVGLIFISLLFAFAFAM.

Belongs to the NKG2D ligand family. Post-translationally, glycosylated. In terms of tissue distribution, expressed predominantly in embryonic brain.

The protein localises to the cell membrane. In terms of biological role, acts as a ligand for KLRK1. This is Retinoic acid early-inducible protein 1-beta (Raet1b) from Mus musculus (Mouse).